We begin with the raw amino-acid sequence, 214 residues long: MSAEVPTFKLVLVGDGGTGKTTFVKRHLTGEFEKKYIATIGVEVHPLAFHTNFGEIKFDVWDTAGQEKFGGLRDGYYINAQCGIIMFDVTSRITYKNVPNWHRDLVRVCENIPIVLCGNKVDVKERKVKAKTITFHRKKNLQYYDISAKSNYNFEKPFLWLARKLAGNPQLEFVASPALAPPEVQVDEQLMQQYQQEMEQATALPLPDEDDADL.

The Small GTPase Ran-type domain occupies Glu-4–Asn-168. Residue Asp-15–Thr-22 coordinates GTP. A switch-I region spans residues Lys-34–Val-42. Residues Gly-65, Asn-119–Asp-122, and Ser-147–Lys-149 each bind GTP. Positions Gly-65 to Gln-81 are switch-II.

The protein belongs to the small GTPase superfamily. Ran family. As to quaternary structure, found in a nuclear export complex with RanGTP, exportin and pre-miRNA.

The protein resides in the nucleus. Its function is as follows. GTP-binding protein involved in nucleocytoplasmic transport. Required for the import of protein into the nucleus and also for RNA export. Involved in chromatin condensation and control of cell cycle. The chain is GTP-binding nuclear protein GSP1/Ran (GSP1) from Candida glabrata (strain ATCC 2001 / BCRC 20586 / JCM 3761 / NBRC 0622 / NRRL Y-65 / CBS 138) (Yeast).